We begin with the raw amino-acid sequence, 275 residues long: tRNA pseudouridine synthase A (275 aa).

Asp-56 acts as the Nucleophile in catalysis. Tyr-109 serves as a coordination point for substrate.

This sequence belongs to the tRNA pseudouridine synthase TruA family.

The enzyme catalyses uridine(38/39/40) in tRNA = pseudouridine(38/39/40) in tRNA. Its function is as follows. Formation of pseudouridine at positions 38, 39 and 40 in the anticodon stem and loop of transfer RNAs. In Methanothermobacter thermautotrophicus (strain ATCC 29096 / DSM 1053 / JCM 10044 / NBRC 100330 / Delta H) (Methanobacterium thermoautotrophicum), this protein is tRNA pseudouridine synthase A.